The primary structure comprises 1207 residues: Ras GTPase-activating protein gap-2 (1207 aa).

2 disordered regions span residues 1 to 29 (MKVIDEKPEDEEEEKDSGSKCKTPSSCTK) and 221 to 316 (RMSS…GSLR). Positions 40 to 383 (PPICHGWLIV…WMENLRKTMN (344 aa)) constitute a PH domain. Residues 223 to 236 (SSSSHNLSTRLSGS) show a composition bias toward low complexity. Polar residues-rich tracts occupy residues 237–247 (TQNLNQPTNAY) and 286–297 (ASNTPSRDSSLY). Residues 374–490 (WMENLRKTMN…SSRSPVERWY (117 aa)) enclose the C2 domain. Polar residues predominate over residues 495-504 (SHSDSGTSRI). Residues 495–516 (SHSDSGTSRIASALGGKSSSQE) form a disordered region. The 211-residue stretch at 579–789 (NLAKEFLCDL…HRMKDFLLRI (211 aa)) folds into the Ras-GAP domain. Disordered regions lie at residues 856-903 (GVFH…LGRS), 923-1013 (FQTP…SSSS), 1086-1107 (ATGGVNAQNRLSLPRTNPRASR), and 1163-1207 (LKSK…VVPN). Composition is skewed to polar residues over residues 862–876 (MVQQPSSDYENSPQQ) and 891–903 (TPPTGQATVLGRS). Over residues 939–953 (TGTSSSRTSDKTTSS) the composition is skewed to low complexity. Basic and acidic residues predominate over residues 955 to 972 (EIRDDTDSDFELREDRGR). Positions 985 to 1013 (ASPSSSQQASSGYLSNNPSRSSYSNSSSS) are enriched in low complexity. A compositionally biased stretch (low complexity) spans 1181–1207 (SGASEDSYDSLSSLDRPSRQSLVVVPN).

As to expression, mainly expressed in gonads and vulval cells. Isoform c in expressed in pharyngeal epithelial cells and several rectal/blast cells in the tail region. Isoform f is weakly expressed in four cells symmetrically located in the vulval region. Isoform g is strongly expressed in the pharyngeal muscle cells m6 in addition to several cells in the tail region.

The protein resides in the cytoplasm. Functionally, GTPase-activating protein, which acts as a negative regulator for the member of the Ras family let-60. Probably decreases the signaling activity of Ras by stimulating its intrinsic GTPase activity, thereby lowering the levels of GTP-bound, active Ras. The different isoforms may play a distinct role in specific tissues. The protein is Ras GTPase-activating protein gap-2 (gap-2) of Caenorhabditis elegans.